The primary structure comprises 411 residues: Efflux pump periplasmic linker BepF (411 aa).

A coiled-coil region spans residues 118–196 (FVLQKDALQA…SLEQAQINLG (79 aa)).

This sequence belongs to the membrane fusion protein (MFP) (TC 8.A.1) family. In terms of assembly, probably part of a tripartite efflux pump, which is composed of an outer membrane efflux protein, an inner membrane protein and a protein that expands the periplasmic space. Could form a tripartite pump with BepC and BepG.

It localises to the periplasm. Functionally, may contribute to resistance to some drugs, such as deoxycholate, sodium dodecyl sulfate and nalidixic acid, in the absence of BepD and BepE. The sequence is that of Efflux pump periplasmic linker BepF (bepF) from Brucella suis biovar 1 (strain 1330).